The primary structure comprises 235 residues: Probable transcriptional regulatory protein Ccur92_05350 (235 aa).

Belongs to the TACO1 family.

The protein resides in the cytoplasm. The protein is Probable transcriptional regulatory protein Ccur92_05350 of Campylobacter curvus (strain 525.92).